Consider the following 176-residue polypeptide: Adipose-secreted signaling protein (176 aa).

The tract at residues 1 to 30 (MATAGKGSKGKGTGVRFTPEGTQGHPQEGT) is disordered. Positions 20–30 (EGTQGHPQEGT) are enriched in polar residues.

Belongs to the ADISSP family.

Its function is as follows. May be involved in thermogenesis and glucose homeostasis. This chain is Adipose-secreted signaling protein, found in Taeniopygia guttata (Zebra finch).